The sequence spans 504 residues: Cystathionine beta-synthase (504 aa).

2 residues coordinate heme: cysteine 12 and histidine 23. Lysine 78 bears the N6-(pyridoxal phosphate)lysine mark. Pyridoxal 5'-phosphate contacts are provided by residues asparagine 108, glycine 215 to threonine 219, and serine 307. 2 consecutive CBS domains span residues leucine 375–cysteine 434 and methionine 442–serine 498.

The protein belongs to the cysteine synthase/cystathionine beta-synthase family. In terms of assembly, homodimer. The cofactor is pyridoxal 5'-phosphate.

The catalysed reaction is L-homocysteine + L-serine = L,L-cystathionine + H2O. It participates in amino-acid biosynthesis; L-cysteine biosynthesis; L-cysteine from L-homocysteine and L-serine: step 1/2. With respect to regulation, has no response to S-adenosyl-methionine/AdoMet, unlike mammalian orthologs. Binds non-covalently to a heme group that may control the redox sensitivity of the enzyme. In terms of biological role, hydro-lyase catalyzing the first step of the transsulfuration pathway, where the hydroxyl group of L-serine is displaced by L-homocysteine in a beta-replacement reaction to form L-cystathionine, the precursor of L-cysteine. The sequence is that of Cystathionine beta-synthase from Apis mellifera (Honeybee).